We begin with the raw amino-acid sequence, 227 residues long: Putative N-acetylmannosamine-6-phosphate 2-epimerase (227 aa).

This sequence belongs to the NanE family.

It carries out the reaction an N-acyl-D-glucosamine 6-phosphate = an N-acyl-D-mannosamine 6-phosphate. It participates in amino-sugar metabolism; N-acetylneuraminate degradation; D-fructose 6-phosphate from N-acetylneuraminate: step 3/5. Functionally, converts N-acetylmannosamine-6-phosphate (ManNAc-6-P) to N-acetylglucosamine-6-phosphate (GlcNAc-6-P). This chain is Putative N-acetylmannosamine-6-phosphate 2-epimerase, found in Shouchella clausii (strain KSM-K16) (Alkalihalobacillus clausii).